The sequence spans 335 residues: Glyceraldehyde-3-phosphate dehydrogenase (335 aa).

NAD(+)-binding positions include threonine 13–isoleucine 14 and glycine 111. Serine 140–asparagine 142 is a binding site for D-glyceraldehyde 3-phosphate. The active-site Nucleophile is the cysteine 141. Residue arginine 169 participates in NAD(+) binding. Residue histidine 195–glycine 196 participates in D-glyceraldehyde 3-phosphate binding. Glutamine 300 lines the NAD(+) pocket.

It belongs to the glyceraldehyde-3-phosphate dehydrogenase family. As to quaternary structure, homotetramer.

It localises to the cytoplasm. It carries out the reaction D-glyceraldehyde 3-phosphate + phosphate + NADP(+) = (2R)-3-phospho-glyceroyl phosphate + NADPH + H(+). The enzyme catalyses D-glyceraldehyde 3-phosphate + phosphate + NAD(+) = (2R)-3-phospho-glyceroyl phosphate + NADH + H(+). It functions in the pathway carbohydrate degradation; glycolysis; pyruvate from D-glyceraldehyde 3-phosphate: step 1/5. This chain is Glyceraldehyde-3-phosphate dehydrogenase, found in Methanococcoides burtonii (strain DSM 6242 / NBRC 107633 / OCM 468 / ACE-M).